The following is a 102-amino-acid chain: Small ribosomal subunit protein uS10 (102 aa).

This sequence belongs to the universal ribosomal protein uS10 family. In terms of assembly, part of the 30S ribosomal subunit.

Involved in the binding of tRNA to the ribosomes. The chain is Small ribosomal subunit protein uS10 from Methylobacillus flagellatus (strain ATCC 51484 / DSM 6875 / VKM B-1610 / KT).